A 397-amino-acid chain; its full sequence is Argininosuccinate synthase (397 aa).

Residue 8–16 (AYSGGLDTS) coordinates ATP. Y87 serves as a coordination point for L-citrulline. G117 provides a ligand contact to ATP. Residues T119, N123, and D124 each contribute to the L-aspartate site. Position 123 (N123) interacts with L-citrulline. L-citrulline is bound by residues R127, S175, E259, and Y271.

The protein belongs to the argininosuccinate synthase family. Type 1 subfamily. Homotetramer.

It localises to the cytoplasm. The enzyme catalyses L-citrulline + L-aspartate + ATP = 2-(N(omega)-L-arginino)succinate + AMP + diphosphate + H(+). It participates in amino-acid biosynthesis; L-arginine biosynthesis; L-arginine from L-ornithine and carbamoyl phosphate: step 2/3. This Streptomyces griseus subsp. griseus (strain JCM 4626 / CBS 651.72 / NBRC 13350 / KCC S-0626 / ISP 5235) protein is Argininosuccinate synthase.